The primary structure comprises 134 residues: uncharacterized protein (134 aa).

The protein to E.coli YbcV and YdfO.

This is an uncharacterized protein from Escherichia coli (strain K12).